The sequence spans 417 residues: UDP-N-acetylglucosamine 1-carboxyvinyltransferase (417 aa).

Residue 22–23 (KN) coordinates phosphoenolpyruvate. Residue arginine 93 coordinates UDP-N-acetyl-alpha-D-glucosamine. Residue cysteine 117 is the Proton donor of the active site. 2-(S-cysteinyl)pyruvic acid O-phosphothioketal is present on cysteine 117. Residues 122–126 (RPVDQ), aspartate 304, and isoleucine 326 contribute to the UDP-N-acetyl-alpha-D-glucosamine site.

This sequence belongs to the EPSP synthase family. MurA subfamily.

The protein resides in the cytoplasm. The catalysed reaction is phosphoenolpyruvate + UDP-N-acetyl-alpha-D-glucosamine = UDP-N-acetyl-3-O-(1-carboxyvinyl)-alpha-D-glucosamine + phosphate. It participates in cell wall biogenesis; peptidoglycan biosynthesis. Cell wall formation. Adds enolpyruvyl to UDP-N-acetylglucosamine. This is UDP-N-acetylglucosamine 1-carboxyvinyltransferase from Laribacter hongkongensis (strain HLHK9).